The chain runs to 328 residues: Malate dehydrogenase (328 aa).

Position 12 to 18 (12 to 18 (GAAGQIG)) interacts with NAD(+). Substrate contacts are provided by R95 and R101. NAD(+)-binding positions include N108, Q115, and 132–134 (VGN). The substrate site is built by N134 and R165. Catalysis depends on H190, which acts as the Proton acceptor.

Belongs to the LDH/MDH superfamily. MDH type 2 family.

The enzyme catalyses (S)-malate + NAD(+) = oxaloacetate + NADH + H(+). In terms of biological role, catalyzes the reversible oxidation of malate to oxaloacetate. This Paracidovorax citrulli (strain AAC00-1) (Acidovorax citrulli) protein is Malate dehydrogenase.